Here is a 298-residue protein sequence, read N- to C-terminus: MMAAERRIQPGELRHWEPMARYTSWRAGGPAERLYRPAGLADLVAFLRRLPEDEPLFWCGLGSNLLVREGGLRGTVILTQGGLDALRVEGEQVHAEAGVACGRLSRYCIRQGLAGAEFFAGIPGTLGGALAMNAGAFGGETWSRVRRVETVDRHGVLRRRGPEDFRVGYRHVSGPAGEWFVAAVLDLEPGDAQAMQARVKALLSQRNRTQPIGEPSCGSVFRNPPGDHAARLIEAAGLKGLRRGAAQVSERHANFIINTGGATPADIEALIEQVRDEVARRHGVTLVPEVHIVGEAQS.

Positions 26 to 190 (RAGGPAERLY…VAAVLDLEPG (165 aa)) constitute an FAD-binding PCMH-type domain. The active site involves Arg170. Ser219 serves as the catalytic Proton donor. The active site involves Glu289.

It belongs to the MurB family. Requires FAD as cofactor.

It localises to the cytoplasm. The catalysed reaction is UDP-N-acetyl-alpha-D-muramate + NADP(+) = UDP-N-acetyl-3-O-(1-carboxyvinyl)-alpha-D-glucosamine + NADPH + H(+). The protein operates within cell wall biogenesis; peptidoglycan biosynthesis. Its function is as follows. Cell wall formation. The protein is UDP-N-acetylenolpyruvoylglucosamine reductase of Alkalilimnicola ehrlichii (strain ATCC BAA-1101 / DSM 17681 / MLHE-1).